Reading from the N-terminus, the 197-residue chain is Small ribosomal subunit protein uS5 (197 aa).

Basic and acidic residues predominate over residues 1–17; that stretch reads MAERENRGRGRGRNREE. 2 disordered regions span residues 1-22 and 158-197; these read MAER…TPEF and NESS…SEEA. The region spanning 22-85 is the S5 DRBM domain; it reads FADRLVAINR…EQAKRQLIRV (64 aa). The segment covering 172 to 186 has biased composition (basic and acidic residues); the sequence is KVADILPKRDDHPQI.

This sequence belongs to the universal ribosomal protein uS5 family. Part of the 30S ribosomal subunit. Contacts proteins S4 and S8.

With S4 and S12 plays an important role in translational accuracy. Its function is as follows. Located at the back of the 30S subunit body where it stabilizes the conformation of the head with respect to the body. This chain is Small ribosomal subunit protein uS5, found in Jannaschia sp. (strain CCS1).